Consider the following 339-residue polypeptide: Very-long-chain 3-oxoacyl-CoA reductase (339 aa).

A helical membrane pass occupies residues 21–41; that stretch reads WTTFLLALGSFNALRIIYQTL. NADP(+) is bound by residues valine 67, asparagine 96, aspartate 121, asparagine 148, tyrosine 215, lysine 219, valine 248, and serine 250. Tyrosine 215 (proton acceptor) is an active-site residue. Lysine 219 acts as the Lowers pKa of active site Tyr in catalysis.

It belongs to the short-chain dehydrogenases/reductases (SDR) family.

It is found in the endoplasmic reticulum membrane. The catalysed reaction is a very-long-chain (3R)-3-hydroxyacyl-CoA + NADP(+) = a very-long-chain 3-oxoacyl-CoA + NADPH + H(+). The protein operates within lipid metabolism; fatty acid biosynthesis. In terms of biological role, component of the microsomal membrane bound fatty acid elongation system, which produces the 26-carbon very long-chain fatty acids (VLCFA) from palmitate. Catalyzes the reduction of the 3-ketoacyl-CoA intermediate that is formed in each cycle of fatty acid elongation. VLCFAs serve as precursors for ceramide and sphingolipids. The sequence is that of Very-long-chain 3-oxoacyl-CoA reductase from Coprinopsis cinerea (strain Okayama-7 / 130 / ATCC MYA-4618 / FGSC 9003) (Inky cap fungus).